The following is a 727-amino-acid chain: Protein TITANIA (727 aa).

The interval 1 to 136 (MFGDSDGSKD…LASLLQPVPA (136 aa)) is disordered. Positions 14 to 25 (GAPPSTTDPPFP) are enriched in pro residues. Residues 67–88 (DDGKHCVERDFLHLSAPKRGDP) are compositionally biased toward basic and acidic residues. Residues 104 to 117 (DSLQLSLSLNSDGP) are compositionally biased toward low complexity. The PHD-type zinc-finger motif lies at 406 to 470 (ACTCSVCHKF…QFQCLACNHS (65 aa)). The stretch at 629–697 (VKCKEAEAKL…LEELKMLENS (69 aa)) forms a coiled coil.

In terms of tissue distribution, widely expressed.

It localises to the nucleus. Probable transcription factor that functions as a regulator of metal transporter genes responsible for essential metals delivery to shoots and normal plant growth. Required for the maintenance of metal transporter gene expression, such as IRT1, IRT2, ZIP1, ZIP9, NRAMP1 and NRAMP5. This is Protein TITANIA from Oryza sativa subsp. japonica (Rice).